Here is a 408-residue protein sequence, read N- to C-terminus: tRNA wybutosine-synthesizing protein 2 homolog (408 aa).

S-adenosyl-L-methionine-binding positions include S201, K208, E248, and 276–277 (DN).

The protein belongs to the class I-like SAM-binding methyltransferase superfamily. TRM5/TYW2 family.

It catalyses the reaction 4-demethylwyosine(37) in tRNA(Phe) + S-adenosyl-L-methionine = 4-demethyl-7-[(3S)-3-amino-3-carboxypropyl]wyosine(37) in tRNA(Phe) + S-methyl-5'-thioadenosine + H(+). It participates in tRNA modification; wybutosine-tRNA(Phe) biosynthesis. Its function is as follows. S-adenosyl-L-methionine-dependent transferase that acts as a component of the wybutosine biosynthesis pathway. Wybutosine is a hyper modified guanosine with a tricyclic base found at the 3'-position adjacent to the anticodon of eukaryotic phenylalanine tRNA. Catalyzes the transfer of the alpha-amino-alpha-carboxypropyl (acp) group from S-adenosyl-L-methionine to the C-7 position of 4-demethylwyosine (imG-14) to produce wybutosine-86. This Danio rerio (Zebrafish) protein is tRNA wybutosine-synthesizing protein 2 homolog (trmt12).